A 38-amino-acid polypeptide reads, in one-letter code: Photosystem II reaction center protein L (38 aa).

The chain crosses the membrane as a helical span at residues 17 to 37 (SLFWGLLLIFILAVLFSSYFF).

It belongs to the PsbL family. PSII is composed of 1 copy each of membrane proteins PsbA, PsbB, PsbC, PsbD, PsbE, PsbF, PsbH, PsbI, PsbJ, PsbK, PsbL, PsbM, PsbT, PsbX, PsbY, PsbZ, Psb30/Ycf12, at least 3 peripheral proteins of the oxygen-evolving complex and a large number of cofactors. It forms dimeric complexes.

Its subcellular location is the plastid. It is found in the chloroplast thylakoid membrane. One of the components of the core complex of photosystem II (PSII). PSII is a light-driven water:plastoquinone oxidoreductase that uses light energy to abstract electrons from H(2)O, generating O(2) and a proton gradient subsequently used for ATP formation. It consists of a core antenna complex that captures photons, and an electron transfer chain that converts photonic excitation into a charge separation. This subunit is found at the monomer-monomer interface and is required for correct PSII assembly and/or dimerization. This Guillardia theta (Cryptophyte) protein is Photosystem II reaction center protein L.